Here is a 159-residue protein sequence, read N- to C-terminus: Large ribosomal subunit protein uL10 (159 aa).

Belongs to the universal ribosomal protein uL10 family. As to quaternary structure, part of the ribosomal stalk of the 50S ribosomal subunit. The N-terminus interacts with L11 and the large rRNA to form the base of the stalk. The C-terminus forms an elongated spine to which L12 dimers bind in a sequential fashion forming a multimeric L10(L12)X complex.

In terms of biological role, forms part of the ribosomal stalk, playing a central role in the interaction of the ribosome with GTP-bound translation factors. The sequence is that of Large ribosomal subunit protein uL10 from Campylobacter jejuni subsp. jejuni serotype O:6 (strain 81116 / NCTC 11828).